An 805-amino-acid polypeptide reads, in one-letter code: MVTSPFSLSPFGQARSTVTGNPLDPTELNQMHGFWRAANYLAVGMIYLRDNPLLREPLQPEQIKHRLLGHWGSSPGISFLYTHLNRIIRKFDQDMLYMVGPGHGAPGFLGPCYLEGSYSRFFAECSEDEDGMKRFFKQFSFPGGIGSHCTPETPGSIHEGGELGYCLSHAYGAAFDNPNLIVVGLAGDGESETGPLATSWHSNKFINPIRDGAVLPVLHLNGYKINNPSVLSRISHEELKALFEGYGYTPYFVEGSDPESMHQAMAATLDHCVSEIHQIQQEARSTGIAVRPRWPMVVMRTPKGWTGPDYVDGHKVEGFWRSHQVPMGGMHENPAHLQQLEAWMRSYKPEELFDEQGTLKPGFKAIAPEGDKRLGSTPYANGGLLRRGLKMPDFRQYGIDVDQPGTIEAPNTAPLGVFLRDVMANNMTNFRLFGPDENSSNKLHAVYEVSKKFWIAEYLEEDQDGGELSPDGRVMEMLSEHTLEGWLEAYLLTGRHGFFATYESFAHVITSMVNQHAKWLDICRHLNWRADISSLNILMTSTVWRQDHNGFTHQDPGFLDVILNKSPDVVRIYLPPDVNSLLSVADHCLQSKNYINIIVCDKQAHLQYQDMTSAIRNCTKGVDIWEWASNDAGTEPDVVMAAAGDIPTKEALAATAMLRQFFPNLRIRFVSVIDLLKLQPESEHPHGLSDRDFDSLFTTDKPIIFNFHAYPWLIHRLTYRRTNHGNLHVRGYKEKGNINTPMDLAIQNQIDRFSLAIDVIDRLPQLRVAGAHIKEMLKDMQIDCTNYAYEHGIDMPEIVNWRWPL.

This sequence belongs to the XFP family. It depends on thiamine diphosphate as a cofactor.

This chain is Probable phosphoketolase, found in Synechocystis sp. (strain ATCC 27184 / PCC 6803 / Kazusa).